Reading from the N-terminus, the 266-residue chain is Glutamate racemase (266 aa).

Residues 9–10 and 41–42 each bind substrate; these read DS and YG. Cysteine 72 serves as the catalytic Proton donor/acceptor. 73-74 provides a ligand contact to substrate; the sequence is NT. Cysteine 184 (proton donor/acceptor) is an active-site residue. Substrate is bound at residue 185-186; that stretch reads TH.

This sequence belongs to the aspartate/glutamate racemases family.

It catalyses the reaction L-glutamate = D-glutamate. It functions in the pathway cell wall biogenesis; peptidoglycan biosynthesis. In terms of biological role, provides the (R)-glutamate required for cell wall biosynthesis. This is Glutamate racemase from Staphylococcus haemolyticus.